The following is a 510-amino-acid chain: ATP synthase subunit alpha (510 aa).

169-176 (GDRQTGKT) is a binding site for ATP.

This sequence belongs to the ATPase alpha/beta chains family. F-type ATPases have 2 components, CF(1) - the catalytic core - and CF(0) - the membrane proton channel. CF(1) has five subunits: alpha(3), beta(3), gamma(1), delta(1), epsilon(1). CF(0) has three main subunits: a(1), b(2) and c(9-12). The alpha and beta chains form an alternating ring which encloses part of the gamma chain. CF(1) is attached to CF(0) by a central stalk formed by the gamma and epsilon chains, while a peripheral stalk is formed by the delta and b chains.

It is found in the cell inner membrane. It carries out the reaction ATP + H2O + 4 H(+)(in) = ADP + phosphate + 5 H(+)(out). Functionally, produces ATP from ADP in the presence of a proton gradient across the membrane. The alpha chain is a regulatory subunit. In Nitrobacter hamburgensis (strain DSM 10229 / NCIMB 13809 / X14), this protein is ATP synthase subunit alpha.